Here is a 200-residue protein sequence, read N- to C-terminus: Peptidyl-tRNA hydrolase (200 aa).

Position 23 (Tyr-23) interacts with tRNA. The Proton acceptor role is filled by His-28. TRNA is bound by residues Phe-79, Asn-81, and Asn-127.

It belongs to the PTH family. As to quaternary structure, monomer.

The protein localises to the cytoplasm. It carries out the reaction an N-acyl-L-alpha-aminoacyl-tRNA + H2O = an N-acyl-L-amino acid + a tRNA + H(+). Its function is as follows. Hydrolyzes ribosome-free peptidyl-tRNAs (with 1 or more amino acids incorporated), which drop off the ribosome during protein synthesis, or as a result of ribosome stalling. Catalyzes the release of premature peptidyl moieties from peptidyl-tRNA molecules trapped in stalled 50S ribosomal subunits, and thus maintains levels of free tRNAs and 50S ribosomes. This chain is Peptidyl-tRNA hydrolase, found in Streptomyces coelicolor (strain ATCC BAA-471 / A3(2) / M145).